Consider the following 188-residue polypeptide: Peptidyl-tRNA hydrolase (188 aa).

Tyr-14 contacts tRNA. Catalysis depends on His-19, which acts as the Proton acceptor. Residues Tyr-64, Asn-66, and Asn-112 each contribute to the tRNA site.

The protein belongs to the PTH family. Monomer.

It localises to the cytoplasm. The catalysed reaction is an N-acyl-L-alpha-aminoacyl-tRNA + H2O = an N-acyl-L-amino acid + a tRNA + H(+). In terms of biological role, hydrolyzes ribosome-free peptidyl-tRNAs (with 1 or more amino acids incorporated), which drop off the ribosome during protein synthesis, or as a result of ribosome stalling. Catalyzes the release of premature peptidyl moieties from peptidyl-tRNA molecules trapped in stalled 50S ribosomal subunits, and thus maintains levels of free tRNAs and 50S ribosomes. In Bacillus pumilus (strain SAFR-032), this protein is Peptidyl-tRNA hydrolase.